We begin with the raw amino-acid sequence, 343 residues long: tRNA N6-adenosine threonylcarbamoyltransferase (343 aa).

2 residues coordinate Fe cation: H120 and H124. Substrate-binding positions include 142 to 146 (VVSGG), D175, G188, D192, and N281. D310 contacts Fe cation.

It belongs to the KAE1 / TsaD family. The cofactor is Fe(2+).

The protein localises to the cytoplasm. The enzyme catalyses L-threonylcarbamoyladenylate + adenosine(37) in tRNA = N(6)-L-threonylcarbamoyladenosine(37) in tRNA + AMP + H(+). Required for the formation of a threonylcarbamoyl group on adenosine at position 37 (t(6)A37) in tRNAs that read codons beginning with adenine. Is involved in the transfer of the threonylcarbamoyl moiety of threonylcarbamoyl-AMP (TC-AMP) to the N6 group of A37, together with TsaE and TsaB. TsaD likely plays a direct catalytic role in this reaction. This chain is tRNA N6-adenosine threonylcarbamoyltransferase, found in Bacillus cereus (strain ATCC 10987 / NRS 248).